The chain runs to 156 residues: Small ribosomal subunit protein uS7 (156 aa).

It belongs to the universal ribosomal protein uS7 family. In terms of assembly, part of the 30S ribosomal subunit. Contacts proteins S9 and S11.

One of the primary rRNA binding proteins, it binds directly to 16S rRNA where it nucleates assembly of the head domain of the 30S subunit. Is located at the subunit interface close to the decoding center, probably blocks exit of the E-site tRNA. In Pelagibacter ubique (strain HTCC1062), this protein is Small ribosomal subunit protein uS7.